The sequence spans 515 residues: RNA-splicing ligase RtcB homolog (515 aa).

Mn(2+) is bound by residues aspartate 121, cysteine 124, histidine 229, histidine 269, and histidine 363. 228–232 contributes to the GMP binding site; sequence NHYGE. GMP contacts are provided by residues 363 to 364, 412 to 415, serine 419, 438 to 441, and lysine 514; these read HN, GGTM, and HGSG. Histidine 438 functions as the GMP-histidine intermediate in the catalytic mechanism.

It belongs to the RtcB family. As to quaternary structure, catalytic component of the tRNA-splicing ligase complex. Requires Mn(2+) as cofactor.

The enzyme catalyses a 3'-end 3'-phospho-ribonucleotide-RNA + a 5'-end dephospho-ribonucleoside-RNA + GTP = a ribonucleotidyl-ribonucleotide-RNA + GMP + diphosphate. The catalysed reaction is a 3'-end 2',3'-cyclophospho-ribonucleotide-RNA + a 5'-end dephospho-ribonucleoside-RNA + GTP + H2O = a ribonucleotidyl-ribonucleotide-RNA + GMP + diphosphate + H(+). Its function is as follows. Catalytic subunit of the tRNA-splicing ligase complex that acts by directly joining spliced tRNA halves to mature-sized tRNAs by incorporating the precursor-derived splice junction phosphate into the mature tRNA as a canonical 3',5'-phosphodiester. May act as an RNA ligase with broad substrate specificity, and may function toward other RNAs. The sequence is that of RNA-splicing ligase RtcB homolog from Theileria annulata.